Reading from the N-terminus, the 192-residue chain is MSENIIPVRAVPAHDHEHDGERACMSRRRFLLFGGTSVALLSIASLPGVAQVMQALKADYARQRIGSLSALKTGEPLDFNYPYPDVRNILVKLGVAAGGGIGADKDIVAFNQQCTHMGGPLDGTYKAEHQILGPCPLHLTTFDLTRHGMVASGHATESLPQIVLEVQGDDIYAIGVLGLVYGFDSMNDVQPA.

Positions Met1 to Val52 form a signal peptide, tat-type signal. Residues Gly102–Ala173 enclose the Rieske domain. [2Fe-2S] cluster is bound by residues Cys114, His116, Cys135, and His138.

This sequence belongs to the AOX family. In terms of assembly, the iodate reductase (Idr) complex is composed of a molybdopterin-dependent iodate reductase (IdrA and IdrB subunits) and two associated peroxidases (IdrP1 and IdrP2). It depends on [2Fe-2S] cluster as a cofactor. Post-translationally, predicted to be exported by the Tat system. The position of the signal peptide cleavage has not been experimentally proven.

The protein resides in the periplasm. Its function is as follows. Involved in iodate respiration. Probably catalyzes the reduction of iodate (IO(3)(-)) to hypoiodous acid (HIO) and H(2)O(2), using a reduced cytochrome c as the electron donor. The protein is Iodate reductase subunit IdrB of Pseudomonas sp. (strain SCT).